Consider the following 206-residue polypeptide: Dephospho-CoA kinase (206 aa).

Positions 4–204 (IVGLTGGIGS…QFYLQQAENK (201 aa)) constitute a DPCK domain. 12–17 (GSGKTT) lines the ATP pocket.

The protein belongs to the CoaE family.

Its subcellular location is the cytoplasm. It catalyses the reaction 3'-dephospho-CoA + ATP = ADP + CoA + H(+). The protein operates within cofactor biosynthesis; coenzyme A biosynthesis; CoA from (R)-pantothenate: step 5/5. Functionally, catalyzes the phosphorylation of the 3'-hydroxyl group of dephosphocoenzyme A to form coenzyme A. In Haemophilus influenzae (strain ATCC 51907 / DSM 11121 / KW20 / Rd), this protein is Dephospho-CoA kinase.